The following is a 2207-amino-acid chain: Genome polyprotein (2207 aa).

Glycine 2 carries the N-myristoyl glycine; by host lipid modification. Topologically, residues 2-1518 (GAQVSSQKVG…NINRAMTILQ (1517 aa)) are cytoplasmic. The segment at 579-599 (GLGDLIEGVVEGVTRNALTPL) is amphipathic alpha-helix. The segment covering 597–613 (TPLTPANNLPDTQSSGP) has biased composition (polar residues). Disordered regions lie at residues 597-620 (TPLTPANNLPDTQSSGPAHSKETP) and 628-647 (GATNPLVPSDTVQTRHVIQK). Residues histidine 899 and aspartate 917 each act as for protease 2A activity in the active site. The Zn(2+) site is built by cysteine 934 and cysteine 936. Cysteine 988 (for protease 2A activity) is an active-site residue. Cysteine 994 and histidine 996 together coordinate Zn(2+). Residues 1126 to 1198 (GDSWLKKFTE…HQSCPSQEHQ (73 aa)) are membrane-binding. An oligomerization region spans residues 1126–1264 (GDSWLKKFTE…SPGTGKSVAT (139 aa)). Residues 1147–1151 (SNKIS) form an RNA-binding region. The SF3 helicase domain maps to 1230 to 1386 (EHTINNYVQF…SEYSRDGKLN (157 aa)). 1254–1261 (GSPGTGKS) contributes to the ATP binding site. 4 residues coordinate Zn(2+): cysteine 1394, cysteine 1397, cysteine 1406, and cysteine 1411. The C4-type zinc-finger motif lies at 1394 to 1411 (CKNCHHPANFKRCCPLVC). Residues 1438–1445 (ERNRRSSI) are RNA-binding. An oligomerization region spans residues 1449-1454 (MEALFQ). The stretch at 1519 to 1534 (AVTTFAAVAGVVYVMY) is an intramembrane region. Residues 1535–2207 (KLFAGHQGAY…TLYRRWLDSF (673 aa)) are Cytoplasmic-facing. Tyrosine 1544 is modified (O-(5'-phospho-RNA)-tyrosine). The region spanning 1564–1742 (GPGFDYAVAM…FAAALKRSYF (179 aa)) is the Peptidase C3 domain. Residues histidine 1603, glutamate 1634, and cysteine 1710 each act as for protease 3C activity in the active site. Positions 1973–2088 (EKLFAFDYTG…SYPHEVDASL (116 aa)) constitute a RdRp catalytic domain. Mg(2+) is bound by residues aspartate 1979 and aspartate 2074.

It belongs to the picornaviruses polyprotein family. In terms of assembly, interacts with capsid protein VP1 and capsid protein VP3 to form heterotrimeric protomers. Interacts with capsid protein VP0, and capsid protein VP3 to form heterotrimeric protomers. Interacts with human PVR. Five protomers subsequently associate to form pentamers which serve as building blocks for the capsid. Interacts with capsid protein VP2, capsid protein VP3 and capsid protein VP4 following cleavage of capsid protein VP0. As to quaternary structure, interacts with capsid protein VP1 and capsid protein VP3 in the mature capsid. In terms of assembly, interacts with capsid protein VP0 and capsid protein VP1 to form heterotrimeric protomers. Five protomers subsequently associate to form pentamers which serve as building blocks for the capsid. Interacts with capsid protein VP4 in the mature capsid. Interacts with protein 2C; this interaction may be important for virion morphogenesis. Interacts with capsid protein VP1 and capsid protein VP3. As to quaternary structure, homodimer. In terms of assembly, homohexamer; forms a hexameric ring structure with 6-fold symmetry characteristic of AAA+ ATPases. Interacts (via N-terminus) with host RTN3 (via reticulon domain); this interaction is important for viral replication. Interacts with capsid protein VP3; this interaction may be important for virion morphogenesis. Interacts with protein 3CD. As to quaternary structure, homodimer. Interacts with host GBF1. Interacts (via GOLD domain) with host ACBD3 (via GOLD domain); this interaction allows the formation of a viral protein 3A/ACBD3 heterotetramer with a 2:2 stoichiometry, which will stimulate the recruitment of host PI4KB in order to synthesize PI4P at the viral RNA replication sites. In terms of assembly, interacts with RNA-directed RNA polymerase. Interacts with protein 3AB and with RNA-directed RNA polymerase. As to quaternary structure, interacts with Viral protein genome-linked and with protein 3CD. It depends on Mg(2+) as a cofactor. Specific enzymatic cleavages in vivo by the viral proteases yield processing intermediates and the mature proteins. In terms of processing, myristoylation is required for the formation of pentamers during virus assembly. Further assembly of 12 pentamers and a molecule of genomic RNA generates the provirion. Post-translationally, during virion maturation, immature virions are rendered infectious following cleavage of VP0 into VP4 and VP2. This maturation seems to be an autocatalytic event triggered by the presence of RNA in the capsid and it is followed by a conformational change infectious virion. Myristoylation is required during RNA encapsidation and formation of the mature virus particle. In terms of processing, VPg is uridylylated by the polymerase into VPg-pUpU. This acts as a nucleotide-peptide primer for the genomic RNA replication.

The protein resides in the virion. It is found in the host cytoplasm. Its subcellular location is the host cytoplasmic vesicle membrane. The protein localises to the host nucleus. The enzyme catalyses a ribonucleoside 5'-triphosphate + H2O = a ribonucleoside 5'-diphosphate + phosphate + H(+). The catalysed reaction is Selective cleavage of Tyr-|-Gly bond in the picornavirus polyprotein.. It carries out the reaction RNA(n) + a ribonucleoside 5'-triphosphate = RNA(n+1) + diphosphate. It catalyses the reaction Selective cleavage of Gln-|-Gly bond in the poliovirus polyprotein. In other picornavirus reactions Glu may be substituted for Gln, and Ser or Thr for Gly.. With respect to regulation, replication or transcription is subject to high level of random mutations by the nucleotide analog ribavirin. In terms of biological role, forms an icosahedral capsid of pseudo T=3 symmetry with capsid proteins VP2 and VP3. The capsid is 300 Angstroms in diameter, composed of 60 copies of each capsid protein and enclosing the viral positive strand RNA genome. Capsid protein VP1 mainly forms the vertices of the capsid. Capsid protein VP1 interacts with host cell receptor PVR to provide virion attachment to target host cells. This attachment induces virion internalization predominantly through clathrin- and caveolin-independent endocytosis in Hela cells and through caveolin-mediated endocytosis in brain microvascular endothelial cells. Tyrosine kinases are probably involved in the entry process. Virus binding to PVR induces increased junctional permeability and rearrangement of junctional proteins. Modulation of endothelial tight junctions, as well as cytolytic infection of endothelial cells themselves, may result in loss of endothelial integrity which may help the virus to reach the CNS. After binding to its receptor, the capsid undergoes conformational changes. Capsid protein VP1 N-terminus (that contains an amphipathic alpha-helix) and capsid protein VP4 are externalized. Together, they shape a pore in the host membrane through which viral genome is translocated to host cell cytoplasm. Its function is as follows. Forms an icosahedral capsid of pseudo T=3 symmetry with capsid proteins VP2 and VP3. The capsid is 300 Angstroms in diameter, composed of 60 copies of each capsid protein and enclosing the viral positive strand RNA genome. Functionally, lies on the inner surface of the capsid shell. After binding to the host receptor, the capsid undergoes conformational changes. Capsid protein VP4 is released, Capsid protein VP1 N-terminus is externalized, and together, they shape a pore in the host membrane through which the viral genome is translocated into the host cell cytoplasm. Component of immature procapsids, which is cleaved into capsid proteins VP4 and VP2 after maturation. Allows the capsid to remain inactive before the maturation step. In terms of biological role, cysteine protease that cleaves viral polyprotein and specific host proteins. It is responsible for the autocatalytic cleavage between the P1 and P2 regions, which is the first cleavage occurring in the polyprotein. Also cleaves the host translation initiation factor EIF4G1, in order to shut down the capped cellular mRNA translation. Inhibits the host nucleus-cytoplasm protein and RNA trafficking by cleaving host members of the nuclear pores including NUP98, NUP62 and NUP153. Counteracts stress granule formation probably by antagonizing its assembly or promoting its dissassembly. Cleaves and inhibits host IFIH1/MDA5, thereby inhibiting the type-I IFN production and the establishment of the antiviral state. Cleaves and inhibits host MAVS, thereby inhibiting the type-I IFN production and the establishment of the antiviral state. Its function is as follows. Plays an essential role in the virus replication cycle by acting as a viroporin. Creates a pore in the host endoplasmic reticulum and as a consequence releases Ca2+ in the cytoplasm of infected cell. In turn, high levels of cytoplasmic calcium may trigger membrane trafficking and transport of viral ER-associated proteins to viroplasms, sites of viral genome replication. Functionally, induces and associates with structural rearrangements of intracellular membranes. Displays RNA-binding, nucleotide binding and NTPase activities. May play a role in virion morphogenesis and viral RNA encapsidation by interacting with the capsid protein VP3. Localizes the viral replication complex to the surface of membranous vesicles. Together with protein 3CD binds the Cis-Active RNA Element (CRE) which is involved in RNA synthesis initiation. Acts as a cofactor to stimulate the activity of 3D polymerase, maybe through a nucleid acid chaperone activity. In terms of biological role, localizes the viral replication complex to the surface of membranous vesicles. It inhibits host cell endoplasmic reticulum-to-Golgi apparatus transport and causes the disassembly of the Golgi complex, possibly through GBF1 interaction. This would result in depletion of MHC, trail receptors and IFN receptors at the host cell surface. Plays an essential role in viral RNA replication by recruiting ACBD3 and PI4KB at the viral replication sites, thereby allowing the formation of the rearranged membranous structures where viral replication takes place. Its function is as follows. Acts as a primer for viral RNA replication and remains covalently bound to viral genomic RNA. VPg is uridylylated prior to priming replication into VPg-pUpU. The oriI viral genomic sequence may act as a template for this. The VPg-pUpU is then used as primer on the genomic RNA poly(A) by the RNA-dependent RNA polymerase to replicate the viral genome. During genome replication, the VPg-RNA linkage is removed by the host TDP2, thereby accelerating replication. During the late stage of the replication cycle, host TDP2 is excluded from sites of viral RNA synthesis and encapsidation, allowing for the generation of progeny virions. Functionally, involved in the viral replication complex and viral polypeptide maturation. It exhibits protease activity with a specificity and catalytic efficiency that is different from protease 3C. Protein 3CD lacks polymerase activity. Protein 3CD binds to the 5'UTR of the viral genome. Major viral protease that mediates proteolytic processing of the polyprotein. Cleaves host EIF5B, contributing to host translation shutoff. Also cleaves host PABPC1, contributing to host translation shutoff. Cleaves host RIGI and thus contributes to the inhibition of type I interferon production. Cleaves host NLRP1, triggers host N-glycine-mediated degradation of the autoinhibitory NLRP1 N-terminal fragment. Inhibits the integrated stress response (ISR) in the infected cell by cleaving host G3BP1. Stress granule formation is thus inhibited, which allows protein synthesis and viral replication. In terms of biological role, replicates the viral genomic RNA on the surface of intracellular membranes. May form linear arrays of subunits that propagate along a strong head-to-tail interaction called interface-I. Covalently attaches UMP to a tyrosine of VPg, which is used to prime RNA synthesis. The positive stranded RNA genome is first replicated at virus induced membranous vesicles, creating a dsRNA genomic replication form. This dsRNA is then used as template to synthesize positive stranded RNA genomes. ss(+)RNA genomes are either translated, replicated or encapsidated. The sequence is that of Genome polyprotein from Homo sapiens (Human).